Consider the following 301-residue polypeptide: Large ribosomal subunit protein uL18y (301 aa).

The segment at 247–267 is disordered; the sequence is RAEPNHKKTEKSAPKEHKRYN. A compositionally biased stretch (basic and acidic residues) spans 249–261; it reads EPNHKKTEKSAPK.

This sequence belongs to the universal ribosomal protein uL18 family. Component of the large ribosomal subunit (LSU).

It localises to the cytoplasm. It is found in the nucleus. The protein resides in the nucleolus. Its subcellular location is the nucleoplasm. Component of the ribosome, a large ribonucleoprotein complex responsible for the synthesis of proteins in the cell. The small ribosomal subunit (SSU) binds messenger RNAs (mRNAs) and translates the encoded message by selecting cognate aminoacyl-transfer RNA (tRNA) molecules. The large subunit (LSU) contains the ribosomal catalytic site termed the peptidyl transferase center (PTC), which catalyzes the formation of peptide bonds, thereby polymerizing the amino acids delivered by tRNAs into a polypeptide chain. The nascent polypeptides leave the ribosome through a tunnel in the LSU and interact with protein factors that function in enzymatic processing, targeting, and the membrane insertion of nascent chains at the exit of the ribosomal tunnel. Seems involved in the regulation of cell proliferation. Essential in leaf polarity establishment, probably having a role for translation in leaf dorsoventral patterning to specify leaf adaxial identity. This is Large ribosomal subunit protein uL18y from Arabidopsis thaliana (Mouse-ear cress).